Consider the following 96-residue polypeptide: (4S)-4-hydroxy-5-phosphonooxypentane-2,3-dione isomerase (96 aa).

The region spanning 2-91 (HVTLVEINVH…MTGPRTKKVF (90 aa)) is the ABM domain.

It belongs to the LsrG family. Homodimer.

It localises to the cytoplasm. It catalyses the reaction (2S)-2-hydroxy-3,4-dioxopentyl phosphate = 3-hydroxy-2,4-dioxopentyl phosphate. In terms of biological role, involved in the degradation of phospho-AI-2, thereby terminating induction of the lsr operon and closing the AI-2 signaling cycle. Catalyzes the conversion of (4S)-4-hydroxy-5-phosphonooxypentane-2,3-dione (P-DPD) to 3-hydroxy-5-phosphonooxypentane-2,4-dione (P-HPD). This is (4S)-4-hydroxy-5-phosphonooxypentane-2,3-dione isomerase from Salmonella typhimurium (strain LT2 / SGSC1412 / ATCC 700720).